Here is a 454-residue protein sequence, read N- to C-terminus: GTPase Der (454 aa).

2 EngA-type G domains span residues 4–167 (AIVA…SEDK) and 188–363 (LQLA…ASWQ). GTP is bound by residues 10-17 (GKPNVGKS), 56-60 (DTPGL), 121-124 (NKTE), 194-201 (GRPNCGKS), 241-245 (DTAGV), and 306-309 (NKCD). The region spanning 364–450 (KRVTTGTLNQ…PVRLSFVKGK (87 aa)) is the KH-like domain.

Belongs to the TRAFAC class TrmE-Era-EngA-EngB-Septin-like GTPase superfamily. EngA (Der) GTPase family. In terms of assembly, associates with the 50S ribosomal subunit.

GTPase that plays an essential role in the late steps of ribosome biogenesis. This is GTPase Der from Orientia tsutsugamushi (strain Boryong) (Rickettsia tsutsugamushi).